A 612-amino-acid polypeptide reads, in one-letter code: Alpha-glycerophosphate oxidase (612 aa).

21-49 lines the FAD pocket; that stretch reads DLLIIGGGITGAGVALQAAASGLDTGLIE. Positions 399 to 408 are enriched in basic and acidic residues; it reads ETSTSEKELD. Residues 399 to 418 are disordered; it reads ETSTSEKELDPSAVSRGSSF.

It belongs to the FAD-dependent glycerol-3-phosphate dehydrogenase family. Requires FAD as cofactor.

It localises to the cytoplasm. It carries out the reaction sn-glycerol 3-phosphate + O2 = dihydroxyacetone phosphate + H2O2. In Streptococcus pyogenes serotype M6 (strain ATCC BAA-946 / MGAS10394), this protein is Alpha-glycerophosphate oxidase (glpO).